Consider the following 416-residue polypeptide: Orexin/Hypocretin receptor type 1 (416 aa).

Positions 1–22 (MEPSATPGAQPGVPTSSGEPFH) are disordered. Topologically, residues 1 to 46 (MEPSATPGAQPGVPTSSGEPFHLPPDYEDEFLRYLWRDYLYPKQYE) are extracellular. Residues 26–41 (DYEDEFLRYLWRDYLY) are required for response to orexin-A. The chain crosses the membrane as a helical span at residues 47 to 67 (WVLIAAYVAVFLIALVGNTLV). Residues 68–82 (CLAVWRNHHMRTVTN) are Cytoplasmic-facing. The helical transmembrane segment at 83–105 (YFIVNLSLADVLVTAICLPASLL) threads the bilayer. Residues 106 to 119 (VDITESWLFGQALC) are Extracellular-facing. Cysteine 119 and cysteine 202 are oxidised to a cystine. Residues 120 to 140 (KVIPYLQAVSVSVAVLTLSFI) traverse the membrane as a helical segment. Over 141–160 (ALDRWYAICHPLLFKSTARR) the chain is Cytoplasmic. The chain crosses the membrane as a helical span at residues 161–182 (ARGSILGIWAVSLAVMVPQAAV). Topologically, residues 183–213 (MECSSVLPELANRTRLFSVCDEHWADELYPK) are extracellular. N-linked (GlcNAc...) asparagine glycosylation is present at asparagine 194. The chain crosses the membrane as a helical span at residues 214–235 (IYHSCFFIVTYLAPLGLMAMAY). Residues 236-298 (FQIFRKLWGR…QMRARRKTAK (63 aa)) lie on the Cytoplasmic side of the membrane. Residues 299 to 321 (MLMVVLLVFALCYLPISVLNVLK) traverse the membrane as a helical segment. Residues 322 to 336 (RVFGMFRQASDREAV) lie on the Extracellular side of the membrane. The chain crosses the membrane as a helical span at residues 337–360 (YACFTFSHWLVYANSAANPIIYNF). At 361 to 416 (LSGKFREQFKAAFSCCLPGLGPGSSARHKSLSLQSRCSVSKVSEHVVLTTVTTVLS) the chain is on the cytoplasmic side.

The protein belongs to the G-protein coupled receptor 1 family. In terms of tissue distribution, widely expressed.

It localises to the cell membrane. Functionally, moderately selective excitatory receptor for orexin-A and, with a lower affinity, for orexin-B neuropeptide. Triggers an increase in cytoplasmic Ca(2+) levels in response to orexin-A binding. The chain is Orexin/Hypocretin receptor type 1 from Mus musculus (Mouse).